Here is a 681-residue protein sequence, read N- to C-terminus: Transketolase 2 (681 aa).

His30 is a binding site for substrate. Residues His69 and Gly116–Leu118 contribute to the thiamine diphosphate site. Asp157 lines the Mg(2+) pocket. Thiamine diphosphate contacts are provided by Gly158 and Asn187. Positions 187 and 189 each coordinate Mg(2+). The substrate site is built by His263, Arg359, and Ser386. His263 is a thiamine diphosphate binding site. Positions 418 and 445 each coordinate thiamine diphosphate. The active-site Proton donor is the Glu418. Positions 469, 477, and 528 each coordinate substrate.

Belongs to the transketolase family. Homodimer. Requires Mg(2+) as cofactor. Ca(2+) serves as cofactor. The cofactor is Mn(2+). It depends on Co(2+) as a cofactor. Thiamine diphosphate is required as a cofactor.

The enzyme catalyses D-sedoheptulose 7-phosphate + D-glyceraldehyde 3-phosphate = aldehydo-D-ribose 5-phosphate + D-xylulose 5-phosphate. Functionally, catalyzes the transfer of a two-carbon ketol group from a ketose donor to an aldose acceptor, via a covalent intermediate with the cofactor thiamine pyrophosphate. In Saccharomyces cerevisiae (strain ATCC 204508 / S288c) (Baker's yeast), this protein is Transketolase 2 (TKL2).